A 123-amino-acid polypeptide reads, in one-letter code: 1,4-dihydroxy-2-naphthoyl-CoA hydrolase (123 aa).

The active-site Nucleophile or proton acceptor is glutamate 46.

Belongs to the thioesterase PaaI family.

The catalysed reaction is 1,4-dihydroxy-2-naphthoyl-CoA + H2O = 1,4-dihydroxy-2-naphthoate + CoA + H(+). Its pathway is quinol/quinone metabolism; menaquinone biosynthesis. Catalyzes the hydrolysis of 1,4-dihydroxy-2-naphthoyl-CoA (DHNA-CoA) to 1,4-dihydroxy-2-naphthoate (DHNA) and free coenzyme A. Production of DHNA is required for protection against bacteriolysis in the cytosol of macrophages and tissue-specific virulence in vivo, suggesting that MenI is required to protect the bacteria from killing in the macrophage cytosol. The chain is 1,4-dihydroxy-2-naphthoyl-CoA hydrolase from Listeria monocytogenes serotype 1/2a (strain 10403S).